Consider the following 373-residue polypeptide: SH3 domain-binding protein 5-like (373 aa).

The disordered stretch occupies residues 1–36 (MEGKEGPPCEVRLPTPGAEREGPVHPELGAFGESAS). Coiled coils occupy residues 35 to 98 (ASDA…ESAR) and 170 to 258 (WQEM…KLRY). Disordered stretches follow at residues 274–308 (ARRT…PADT) and 332–373 (DLTD…SVSL). Residues 332 to 360 (DLTDVTSLDGRETGAVESGGSRERGEDRG) show a composition bias toward basic and acidic residues.

This sequence belongs to the SH3BP5 family.

Functions as a guanine nucleotide exchange factor (GEF) for rab11a. The sequence is that of SH3 domain-binding protein 5-like (sh3bp5l) from Xenopus laevis (African clawed frog).